Here is a 256-residue protein sequence, read N- to C-terminus: Nuclear shuttle protein (256 aa).

The Bipartite nuclear localization signal signature appears at 21–42 (NYGFKRTFVVKRGDAKRRQTQV). The Nuclear localization signal signature appears at 81–96 (QLCKTQPNRSRSYIKL). The segment at 150-187 (ELFGARIHSLGNLAVTPALKERFYILHVLKRVISVEKD) is interaction with Arabidopsis thaliana NSI protein.

This sequence belongs to the begomovirus nuclear shuttle protein family. As to quaternary structure, binds to single-stranded and double-stranded viral DNA. Interacts with the host nuclear shuttle interacting (NSI) protein. This interaction may allow NSP to recruit NSI monomers to the viral genome and thus regulate nuclear export of viral genome by NSP.

It localises to the host nucleus. The protein resides in the host cytoplasm. Its subcellular location is the host cell membrane. In terms of biological role, binds to the genomic viral ssDNA, shuttles it into and out of the cell nucleus. Begomoviruses use 2 proteins to transport their DNA from cell to cell. The nuclear shuttle protein (NSP) shuttles it between nucleus and cytoplasm and the movement protein (MP) probably transports the DNA-NSP complex to the cell periphery and facilitates movement across the cell wall. The protein is Nuclear shuttle protein of Pepper huasteco yellow vein virus (PHYVV).